Consider the following 173-residue polypeptide: Ribosome maturation factor RimP (173 aa).

Belongs to the RimP family.

The protein localises to the cytoplasm. Its function is as follows. Required for maturation of 30S ribosomal subunits. This is Ribosome maturation factor RimP from Chlorobaculum tepidum (strain ATCC 49652 / DSM 12025 / NBRC 103806 / TLS) (Chlorobium tepidum).